The sequence spans 846 residues: Rho GTPase-activating protein 17 (846 aa).

In terms of domain architecture, BAR spans 14–246 (QTVGRAEKTE…MRAHQDKWAE (233 aa)). The Rho-GAP domain occupies 252–442 (TPLEEHLKRS…PIIQHADWFF (191 aa)). Polar residues predominate over residues 459 to 475 (TPNSNHSSHTGNDSDSG). A disordered region spans residues 459 to 482 (TPNSNHSSHTGNDSDSGTLERKRP). A phosphoserine mark is found at serine 484 and serine 575. Positions 519-807 (IAPAFQPPLP…ASRIVTDTNS (289 aa)) are disordered. The segment covering 592-619 (RNSNQMTTVPNQAQTGGNSHQLSVSTPH) has biased composition (polar residues). Residues 637–650 (APAPPKPGNLPPGH) show a composition bias toward pro residues. The segment covering 653-690 (GQSSPGTGTSPKPSARSPSPPQQQQQQQQQQQQQQQQQ) has biased composition (low complexity). Phosphoserine is present on residues serine 698 and serine 700. 2 stretches are compositionally biased toward pro residues: residues 704-717 (IQAP…PPTQ) and 726-741 (EPGP…PSTP). A phosphothreonine mark is found at threonine 730, threonine 734, and threonine 736. The short motif at 730–743 (TPPQTPTPPSTPPL) is the SH3-binding element. Residue serine 739 is modified to Phosphoserine. Threonine 740 is modified (phosphothreonine). Polar residues predominate over residues 746 to 757 (QNPSQSETTQLH). Residues 772–782 (RPSVPPPPHPP) show a composition bias toward pro residues. A compositionally biased stretch (polar residues) spans 791–807 (LTSSVPTASRIVTDTNS).

As to quaternary structure, component of a complex whose core is composed of ARHGAP17, AMOT, PALS1, PATJ and PARD3/PAR3. Interacts with NHERF1, FNBP1, TRIP10, CAPZA (CAPZA1, CAPZA2 or CAPZA3), CAPZB, CD2AP and SH3KBP1/CIN85.

It localises to the membrane. The protein resides in the cytoplasm. It is found in the cell junction. Its subcellular location is the tight junction. Rho GTPase-activating protein involved in the maintenance of tight junction by regulating the activity of CDC42, thereby playing a central role in apical polarity of epithelial cells. Specifically acts as a GTPase activator for the CDC42 GTPase by converting it to an inactive GDP-bound state. The complex formed with AMOT acts by regulating the uptake of polarity proteins at tight junctions, possibly by deciding whether tight junction transmembrane proteins are recycled back to the plasma membrane or sent elsewhere. Participates in the Ca(2+)-dependent regulation of exocytosis, possibly by catalyzing GTPase activity of Rho family proteins and by inducing the reorganization of the cortical actin filaments. Acts as a GTPase activator in vitro for RAC1. The polypeptide is Rho GTPase-activating protein 17 (Arhgap17) (Mus musculus (Mouse)).